Consider the following 190-residue polypeptide: UPF0200 protein TGAM_0868 (190 aa).

Residue 7 to 14 (GMPGSGKS) coordinates ATP.

It belongs to the UPF0200 family.

The polypeptide is UPF0200 protein TGAM_0868 (Thermococcus gammatolerans (strain DSM 15229 / JCM 11827 / EJ3)).